Reading from the N-terminus, the 130-residue chain is Large ribosomal subunit protein bL17 (130 aa).

The protein belongs to the bacterial ribosomal protein bL17 family. As to quaternary structure, part of the 50S ribosomal subunit. Contacts protein L32.

The polypeptide is Large ribosomal subunit protein bL17 (Buchnera aphidicola subsp. Acyrthosiphon pisum (strain 5A)).